The following is a 381-amino-acid chain: Succinyl-diaminopimelate desuccinylase (381 aa).

Residue His-69 coordinates Zn(2+). Residue Asp-71 is part of the active site. Position 103 (Asp-103) interacts with Zn(2+). Glu-137 (proton acceptor) is an active-site residue. Glu-138, Glu-166, and His-355 together coordinate Zn(2+).

The protein belongs to the peptidase M20A family. DapE subfamily. In terms of assembly, homodimer. The cofactor is Zn(2+). It depends on Co(2+) as a cofactor.

The catalysed reaction is N-succinyl-(2S,6S)-2,6-diaminopimelate + H2O = (2S,6S)-2,6-diaminopimelate + succinate. It participates in amino-acid biosynthesis; L-lysine biosynthesis via DAP pathway; LL-2,6-diaminopimelate from (S)-tetrahydrodipicolinate (succinylase route): step 3/3. Functionally, catalyzes the hydrolysis of N-succinyl-L,L-diaminopimelic acid (SDAP), forming succinate and LL-2,6-diaminopimelate (DAP), an intermediate involved in the bacterial biosynthesis of lysine and meso-diaminopimelic acid, an essential component of bacterial cell walls. The chain is Succinyl-diaminopimelate desuccinylase from Rickettsia africae (strain ESF-5).